Here is a 227-residue protein sequence, read N- to C-terminus: Lipoprotein-releasing system ATP-binding protein LolD (227 aa).

The ABC transporter domain occupies 7-227 (LQLTGVERHY…TISDGKIVDF (221 aa)). 43–50 (APSGTGKS) lines the ATP pocket.

The protein belongs to the ABC transporter superfamily. Lipoprotein translocase (TC 3.A.1.125) family. The complex is composed of two ATP-binding proteins (LolD) and two transmembrane proteins (LolC and LolE).

It is found in the cell inner membrane. Part of the ABC transporter complex LolCDE involved in the translocation of mature outer membrane-directed lipoproteins, from the inner membrane to the periplasmic chaperone, LolA. Responsible for the formation of the LolA-lipoprotein complex in an ATP-dependent manner. The sequence is that of Lipoprotein-releasing system ATP-binding protein LolD from Rhizobium johnstonii (strain DSM 114642 / LMG 32736 / 3841) (Rhizobium leguminosarum bv. viciae).